The primary structure comprises 104 residues: NADH-ubiquinone oxidoreductase 12 kDa subunit, mitochondrial (104 aa).

The protein belongs to the complex I NDUFS6 subunit family. In terms of assembly, complex I is composed of about 40 different subunits.

It localises to the mitochondrion inner membrane. In terms of biological role, accessory subunit of the mitochondrial membrane respiratory chain NADH dehydrogenase (Complex I), that is believed not to be involved in catalysis. Complex I functions in the transfer of electrons from NADH to the respiratory chain. The immediate electron acceptor for the enzyme is believed to be ubiquinone. The sequence is that of NADH-ubiquinone oxidoreductase 12 kDa subunit, mitochondrial (nuo-12.3) from Neurospora crassa (strain ATCC 24698 / 74-OR23-1A / CBS 708.71 / DSM 1257 / FGSC 987).